The chain runs to 293 residues: Ribosomal protein L11 methyltransferase (293 aa).

S-adenosyl-L-methionine is bound by residues T145, G166, D188, and N229.

This sequence belongs to the methyltransferase superfamily. PrmA family.

The protein resides in the cytoplasm. It carries out the reaction L-lysyl-[protein] + 3 S-adenosyl-L-methionine = N(6),N(6),N(6)-trimethyl-L-lysyl-[protein] + 3 S-adenosyl-L-homocysteine + 3 H(+). In terms of biological role, methylates ribosomal protein L11. In Idiomarina loihiensis (strain ATCC BAA-735 / DSM 15497 / L2-TR), this protein is Ribosomal protein L11 methyltransferase.